Here is a 399-residue protein sequence, read N- to C-terminus: Tryptophan synthase beta chain (399 aa).

Lysine 92 carries the post-translational modification N6-(pyridoxal phosphate)lysine.

This sequence belongs to the TrpB family. As to quaternary structure, tetramer of two alpha and two beta chains. Pyridoxal 5'-phosphate serves as cofactor.

It carries out the reaction (1S,2R)-1-C-(indol-3-yl)glycerol 3-phosphate + L-serine = D-glyceraldehyde 3-phosphate + L-tryptophan + H2O. It participates in amino-acid biosynthesis; L-tryptophan biosynthesis; L-tryptophan from chorismate: step 5/5. In terms of biological role, the beta subunit is responsible for the synthesis of L-tryptophan from indole and L-serine. The protein is Tryptophan synthase beta chain of Legionella pneumophila subsp. pneumophila (strain Philadelphia 1 / ATCC 33152 / DSM 7513).